Reading from the N-terminus, the 221-residue chain is Late embryogenesis abundant protein, group 3 (221 aa).

Residues 1–221 (MASHQDKASY…KDSSTITRDH (221 aa)) form a disordered region. Over residues 33–42 (TAQHAKDRAA) the composition is skewed to basic and acidic residues. Residues 43-52 (DAAGHAAGKG) show a composition bias toward low complexity. 2 stretches are compositionally biased toward basic and acidic residues: residues 53–63 (QDAKEATKQKA) and 72–147 (KKTD…KQKA). Residues 212 to 221 (KDSSTITRDH) show a composition bias toward polar residues.

The protein belongs to the LEA type 4 family.

This is Late embryogenesis abundant protein, group 3 (MGL3) from Zea mays (Maize).